We begin with the raw amino-acid sequence, 132 residues long: Phosphoribosyl-AMP cyclohydrolase (132 aa).

Position 86 (D86) interacts with Mg(2+). C87 contacts Zn(2+). Mg(2+) contacts are provided by D88 and D90. Zn(2+) is bound by residues C103 and C110.

The protein belongs to the PRA-CH family. In terms of assembly, homodimer. Requires Mg(2+) as cofactor. Zn(2+) serves as cofactor.

It localises to the cytoplasm. It catalyses the reaction 1-(5-phospho-beta-D-ribosyl)-5'-AMP + H2O = 1-(5-phospho-beta-D-ribosyl)-5-[(5-phospho-beta-D-ribosylamino)methylideneamino]imidazole-4-carboxamide. It participates in amino-acid biosynthesis; L-histidine biosynthesis; L-histidine from 5-phospho-alpha-D-ribose 1-diphosphate: step 3/9. Its function is as follows. Catalyzes the hydrolysis of the adenine ring of phosphoribosyl-AMP. This is Phosphoribosyl-AMP cyclohydrolase from Haloquadratum walsbyi (strain DSM 16790 / HBSQ001).